The following is a 128-amino-acid chain: Kinase-associated lipoprotein B (128 aa).

An N-terminal signal peptide occupies residues 1-25 (MSTFETGSIVKGFYKTGVYIGEITA). Cys26 carries the N-palmitoyl cysteine lipid modification. Cys26 carries the S-diacylglycerol cysteine lipid modification.

The protein resides in the cell membrane. Its function is as follows. May play a role in the activation or the expression of KinB. The sequence is that of Kinase-associated lipoprotein B (kapB) from Bacillus subtilis (strain 168).